A 468-amino-acid chain; its full sequence is Protein maelstrom 2 (468 aa).

The HMG box DNA-binding region spans 2–69 (PPKKHSGFMM…LTRVKKERLN (68 aa)). Residues 374 to 393 (KEDSPTVLSPASSRRSLASS) are disordered. Residues 381 to 393 (LSPASSRRSLASS) are compositionally biased toward low complexity.

The protein belongs to the maelstrom family.

It localises to the cytoplasm. It is found in the nucleus. Its function is as follows. Involved both in the piRNA and miRNA metabolic processes. As a component of the meiotic nuage, plays a central role during oogenesis by repressing transposable elements and preventing their mobilization, which is essential for the germline integrity. Repression of transposable elements is mediated via the piRNA metabolic process, which mediates the repression of transposable elements during meiosis by forming complexes composed of piRNAs and Piwi proteins and governs the repression of transposons. As a nuclear component, it is required for proper differentiation in the germline stem cell (GSC) lineage by repressing microRNA-7 (miR-7), thereby acting as an indirect regulator of bag-of-marbles (Bam). Acts by binding to the promoter of miR-7 gene and repressing its expression; miR-7 repression alleviates the Bam repression by miR-7, thereby allowing differentiation in the germline stem cell (GSC) lineage. The sequence is that of Protein maelstrom 2 (mael2) from Drosophila ananassae (Fruit fly).